A 313-amino-acid polypeptide reads, in one-letter code: 3'-5' exoribonuclease YhaM (313 aa).

The OB DNA-binding region spans 22–90; the sequence is SSVKGTASNG…QLKIRQIRQA (69 aa). One can recognise an HD domain in the interval 163–279; sequence HVVSMLRLAK…LHQIDLMDAS (117 aa).

Belongs to the YhaM family.

Functionally, shows a 3'-5' exoribonuclease activity. The chain is 3'-5' exoribonuclease YhaM from Listeria innocua serovar 6a (strain ATCC BAA-680 / CLIP 11262).